We begin with the raw amino-acid sequence, 154 residues long: MTTSIELSSYRDQHYKGSRFEQERSLRDSSTLYVGNLSFYTAEEQIHELFSRCGDVRMIVMGLDKYKKTPCGFCFVEYYKRSEAEAAMRFVNGTRLDDRLIRVDWDAGFIEGRQYGRGKTGGQVRDEYRTDYDAARGGYGKLLTQKIAPNPDNR.

Residues Tyr10, Tyr33, 102-106 (RVDWD), 113-117 (RQYGR), and 123-124 (QV) contribute to the mRNA site. Positions 30-108 (STLYVGNLSF…RLIRVDWDAG (79 aa)) constitute an RRM domain.

The protein belongs to the RRM NCBP2 family. In terms of assembly, component of the nuclear cap-binding complex (CBC), a heterodimer composed of Cbp80 and Cbp20 that interacts with m7GpppG-capped RNA. Interacts with Ars2.

It localises to the nucleus. Its function is as follows. Component of the cap-binding complex (CBC), which binds co-transcriptionally to the 5' cap of pre-mRNAs and is involved in various processes such as pre-mRNA splicing and RNA-mediated gene silencing (RNAi). The CBC complex is involved in miRNA-mediated RNA interference via its interaction with Ars2 and is required for primary microRNAs (miRNAs) processing. Also involved in innate immunity via the short interfering RNAs (siRNAs) processing machinery by restricting the viral RNA production. In the CBC complex, Cbp20 recognizes and binds capped RNAs (m7GpppG-capped RNA) but requires Cbp80 to stabilize the movement of its N-terminal loop and lock the CBC into a high affinity cap-binding state with the cap structure. The polypeptide is Nuclear cap-binding protein subunit 2-A (Cbp20-A) (Drosophila virilis (Fruit fly)).